A 131-amino-acid chain; its full sequence is Histone H2B.1 (131 aa).

Residues methionine 1–proline 19 show a composition bias toward basic and acidic residues. A disordered region spans residues methionine 1–lysine 38. N6-acetyllysine; alternate is present on residues lysine 7 and lysine 8. Residues lysine 7 and lysine 8 each participate in a glycyl lysine isopeptide (Lys-Gly) (interchain with G-Cter in SUMO); alternate cross-link. Serine 11 carries the phosphoserine modification. Position 12 is an N6-acetyllysine (lysine 12). N6-acetyllysine; alternate occurs at positions 17, 18, 22, and 23. Residues lysine 17 and lysine 18 each participate in a glycyl lysine isopeptide (Lys-Gly) (interchain with G-Cter in SUMO); alternate cross-link. Lysine 22 bears the N6-butyryllysine; alternate mark. An N6-methyllysine; alternate modification is found at lysine 23. Lysine 35 carries the post-translational modification N6-succinyllysine. An N6,N6-dimethyllysine modification is found at lysine 38. Residue lysine 47 is modified to N6-succinyllysine. Lysine 124 is covalently cross-linked (Glycyl lysine isopeptide (Lys-Gly) (interchain with G-Cter in ubiquitin)).

The protein belongs to the histone H2B family. The nucleosome is a histone octamer containing two molecules each of H2A, H2B, H3 and H4 assembled in one H3-H4 heterotetramer and two H2A-H2B heterodimers. The octamer wraps approximately 147 bp of DNA. Post-translationally, monoubiquitinated by the RAD6/UBC2-BRE1 complex to form H2BK123ub1. H2BK123ub1 gives a specific tag for epigenetic transcriptional activation and is also prerequisite for H3K4me and H3K79me formation. H2BK123ub1 also modulates the formation of double-strand breaks during meiosis and is a prerequisite for DNA-damage checkpoint activation. Deubiquitination is performed by UBP8 in presence of SGF11. In terms of processing, phosphorylated by STE20 to form H2BS10ph during progression through meiotic prophase. May be correlated with chromosome condensation. H2BS10ph is also formed after H(2)O(2) treatment, and is a step leading to apoptosis. Acetylated by GCN5, a component of the SAGA complex, to form H2BK11ac and H2BK16ac. H2BK16ac can also be formed by ESA1, a component of the NuA4 histone acetyltransferase (HAT) complex. Acetylation of N-terminal lysines and particularly formation of H2BK11acK16ac has a positive effect on transcription. Post-translationally, sumoylation to form H2BK6su or H2BK7su, and probably also H2BK16su or H2BK17su, occurs preferentially near the telomeres and represses gene transcription.

Its subcellular location is the nucleus. It localises to the chromosome. Its function is as follows. Core component of nucleosome. Nucleosomes wrap and compact DNA into chromatin, limiting DNA accessibility to the cellular machineries which require DNA as a template. Histones thereby play a central role in transcription regulation, DNA repair, DNA replication and chromosomal stability. DNA accessibility is regulated via a complex set of post-translational modifications of histones, also called histone code, and nucleosome remodeling. The polypeptide is Histone H2B.1 (HTB1) (Saccharomyces cerevisiae (strain ATCC 204508 / S288c) (Baker's yeast)).